A 439-amino-acid chain; its full sequence is Histidinol dehydrogenase (439 aa).

NAD(+) is bound by residues Tyr132, Gln194, and Asn217. Substrate contacts are provided by Ser244, Gln266, and His269. Residues Gln266 and His269 each contribute to the Zn(2+) site. Active-site proton acceptor residues include Glu335 and His336. Substrate-binding residues include His336, Asp369, Glu423, and His428. Asp369 contributes to the Zn(2+) binding site. His428 contacts Zn(2+).

Belongs to the histidinol dehydrogenase family. Requires Zn(2+) as cofactor.

It catalyses the reaction L-histidinol + 2 NAD(+) + H2O = L-histidine + 2 NADH + 3 H(+). The protein operates within amino-acid biosynthesis; L-histidine biosynthesis; L-histidine from 5-phospho-alpha-D-ribose 1-diphosphate: step 9/9. Catalyzes the sequential NAD-dependent oxidations of L-histidinol to L-histidinaldehyde and then to L-histidine. The polypeptide is Histidinol dehydrogenase (his2) (Schizosaccharomyces pombe (strain 972 / ATCC 24843) (Fission yeast)).